The chain runs to 81 residues: Conotoxin ArMKLT2-01 (81 aa).

Residues 1–19 form the signal peptide; sequence MKLTCVIIVVALFLTACHA. The propeptide occupies 20–43; the sequence is KDKQEHPAVRGSDDMQDSEDLKLA. Disulfide bonds link Cys46–Cys61, Cys53–Cys65, and Cys60–Cys74.

It belongs to the conotoxin O1 superfamily. Expressed by the venom duct.

It localises to the secreted. The protein is Conotoxin ArMKLT2-01 of Conus arenatus (Sand-dusted cone).